Reading from the N-terminus, the 1575-residue chain is Mediator of RNA polymerase II transcription subunit 1 (1575 aa).

The segment at M1–N670 is interaction with the Mediator complex and THRA. The segment at M16–G590 is interaction with ESR1. 2 interaction with the Mediator complex regions span residues F108–T212 and S215–G390. The segment at P405–M644 is interaction with THRA. The interaction with VDR stretch occupies residues P542–E789. S588 is subject to Phosphoserine. The short motif at L604–L608 is the LXXLL motif 1 element. 5 disordered regions span residues Q609–D706, H737–Q760, S791–S818, S874–F895, and S951–D1564. A compositionally biased stretch (pro residues) spans P622 to V632. Positions P622–K701 are interaction with GATA1. The segment at P622–K701 is interaction with PPARGC1A and THRA. The short motif at L645 to L649 is the LXXLL motif 2 element. Positions Q655–S675 are enriched in polar residues. The interval D656–Q1066 is interaction with ESR1. A Phosphoserine modification is found at S664. Residues P696 to D706 are compositionally biased toward basic and acidic residues. S795 is subject to Phosphoserine. Residue T805 is modified to Phosphothreonine. Residues R808 to S818 show a composition bias toward polar residues. Residues Q875–A902 carry the Integrase domain-binding motif (IBM) motif. Phosphoserine is present on residues S887, S953, and S955. Residues L963–E974 show a composition bias toward basic and acidic residues. Positions N976–P986 are enriched in gly residues. Phosphothreonine; by MAPK1 or MAPK3 is present on T1032. Low complexity predominate over residues P1034 to T1051. Phosphothreonine occurs at positions 1051 and 1057. Composition is skewed to low complexity over residues S1078 to S1094 and S1101 to G1152. Residue S1158 is modified to Phosphoserine. Polar residues predominate over residues S1158–M1184. N6-acetyllysine is present on K1179. Low complexity predominate over residues N1185 to H1197. Position 1209 is a phosphoserine (S1209). T1217 is modified (phosphothreonine). Low complexity-rich tracts occupy residues S1220–S1258 and S1265–K1295. S1225 is subject to Phosphoserine. The interaction with TP53 stretch occupies residues S1251–L1423. A phosphoserine mark is found at S1304 and S1349. Residues M1331–E1352 are compositionally biased toward polar residues. The span at Q1354–K1366 shows a compositional bias: basic and acidic residues. S1405 and S1435 each carry phosphoserine. Polar residues-rich tracts occupy residues I1427–T1442 and P1450–S1484. Position 1442 is a phosphothreonine (T1442). T1459 carries the phosphothreonine; by MAPK1 or MAPK3 modification. A phosphoserine mark is found at S1465, S1467, S1481, S1483, and S1484. Residues K1498–K1507 are compositionally biased toward basic residues. Residue K1523 is modified to N6-acetyllysine. The segment covering W1527–I1545 has biased composition (polar residues).

It belongs to the Mediator complex subunit 1 family. In terms of assembly, component of the Mediator complex, which is composed of MED1, MED4, MED6, MED7, MED8, MED9, MED10, MED11, MED12, MED13, MED13L, MED14, MED15, MED16, MED17, MED18, MED19, MED20, MED21, MED22, MED23, MED24, MED25, MED26, MED27, MED29, MED30, MED31, CCNC, CDK8 and CDC2L6/CDK11. The MED12, MED13, CCNC and CDK8 subunits form a distinct module termed the CDK8 module. Mediator containing the CDK8 module is less active than Mediator lacking this module in supporting transcriptional activation. Individual preparations of the Mediator complex lacking one or more distinct subunits have been variously termed ARC, CRSP, DRIP, PC2, SMCC and TRAP. This subunit specifically interacts with a number of nuclear receptors in a ligand-dependent fashion including AR, ESR1, ESR2, PPARA, PPARG, RORA, RXRA, RXRG, THRA, THRB and VDR. Interacts with CTNNB1, GABPA, GLI3, PPARGC1A and TP53. Interacts with GATA1 and YWHAH. Interacts with CLOCK; this interaction requires the presence of THRAP3. Interacts with CCAR1. Interacts with NR4A3. Interacts (via IBM motif) with PSIP1 (via IBD domain); phosphorylation increases its affinity for PSIP1. Interacts with USP22. Phosphorylated by MAPK1 or MAPK3 during G2/M phase which may enhance protein stability and promote entry into the nucleolus. Phosphorylation increases its interaction with PSIP1. In terms of tissue distribution, widely expressed in the adult, with high levels of expression in the liver, lung, intestinal mucosa, kidney cortex, thymic cortex, splenic follicle and seminiferous epithelium in testis. Also expressed in the adult heart, brain, spleen and skeletal muscle.

The protein resides in the nucleus. Component of the Mediator complex, a coactivator involved in the regulated transcription of nearly all RNA polymerase II-dependent genes. Mediator functions as a bridge to convey information from gene-specific regulatory proteins to the basal RNA polymerase II transcription machinery. Mediator is recruited to promoters by direct interactions with regulatory proteins and serves as a scaffold for the assembly of a functional preinitiation complex with RNA polymerase II and the general transcription factors. Essential for embryogenesis, including development of the central nervous system, heart, liver and placenta and for erythropoiesis. Also required for normal transcriptional control of thyroid-stimulating hormone beta (TSHB) in the pituitary. Acts as a coactivator for GATA1-mediated transcriptional activation during erythroid differentiation of K562 erythroleukemia cells. The protein is Mediator of RNA polymerase II transcription subunit 1 (Med1) of Mus musculus (Mouse).